The following is a 586-amino-acid chain: A-type ATP synthase subunit A (586 aa).

Position 232–239 (232–239 (GPFGSGKT)) interacts with ATP.

The protein belongs to the ATPase alpha/beta chains family. As to quaternary structure, has multiple subunits with at least A(3), B(3), C, D, E, F, H, I and proteolipid K(x).

It localises to the cell membrane. It carries out the reaction ATP + H2O + 4 H(+)(in) = ADP + phosphate + 5 H(+)(out). Its function is as follows. Component of the A-type ATP synthase that produces ATP from ADP in the presence of a proton gradient across the membrane. The A chain is the catalytic subunit. The sequence is that of A-type ATP synthase subunit A from Methanococcus maripaludis (strain C7 / ATCC BAA-1331).